The primary structure comprises 455 residues: Trigger factor (455 aa).

One can recognise a PPIase FKBP-type domain in the interval 169–262 (GDVAIVDYEG…VKELKAKELP (94 aa)).

It belongs to the FKBP-type PPIase family. Tig subfamily.

The protein localises to the cytoplasm. It catalyses the reaction [protein]-peptidylproline (omega=180) = [protein]-peptidylproline (omega=0). Functionally, involved in protein export. Acts as a chaperone by maintaining the newly synthesized protein in an open conformation. Functions as a peptidyl-prolyl cis-trans isomerase. The sequence is that of Trigger factor from Rippkaea orientalis (strain PCC 8801 / RF-1) (Cyanothece sp. (strain PCC 8801)).